Reading from the N-terminus, the 217-residue chain is RING-H2 finger protein ATL70 (217 aa).

A helical transmembrane segment spans residues 61–81; the sequence is IGGFRYGIGVSIGVLLLITTI. The segment at 147 to 189 adopts an RING-type; atypical zinc-finger fold; sequence CAICLGDYKGKHLLRQLPDCNHLFHLKCIDTWLRLNPTCPVCR.

This sequence belongs to the RING-type zinc finger family. ATL subfamily.

The protein resides in the membrane. It carries out the reaction S-ubiquitinyl-[E2 ubiquitin-conjugating enzyme]-L-cysteine + [acceptor protein]-L-lysine = [E2 ubiquitin-conjugating enzyme]-L-cysteine + N(6)-ubiquitinyl-[acceptor protein]-L-lysine.. It participates in protein modification; protein ubiquitination. This Arabidopsis thaliana (Mouse-ear cress) protein is RING-H2 finger protein ATL70 (ATL70).